Consider the following 504-residue polypeptide: 2-isopropylmalate synthase (504 aa).

One can recognise a Pyruvate carboxyltransferase domain in the interval 6–267 (IIIFDTTLRD…YTGIISKEIY (262 aa)). Residues Asp15, His201, His203, and Asn237 each contribute to the Mn(2+) site. The segment at 391-504 (EITDLLQSSG…LNSYLRIHKN (114 aa)) is regulatory domain.

This sequence belongs to the alpha-IPM synthase/homocitrate synthase family. LeuA type 1 subfamily. As to quaternary structure, homodimer. Mn(2+) serves as cofactor.

The protein localises to the cytoplasm. It catalyses the reaction 3-methyl-2-oxobutanoate + acetyl-CoA + H2O = (2S)-2-isopropylmalate + CoA + H(+). Its pathway is amino-acid biosynthesis; L-leucine biosynthesis; L-leucine from 3-methyl-2-oxobutanoate: step 1/4. Catalyzes the condensation of the acetyl group of acetyl-CoA with 3-methyl-2-oxobutanoate (2-ketoisovalerate) to form 3-carboxy-3-hydroxy-4-methylpentanoate (2-isopropylmalate). This Campylobacter concisus (strain 13826) protein is 2-isopropylmalate synthase.